The primary structure comprises 1368 residues: DNA-directed RNA polymerase subunit beta (1368 aa).

This sequence belongs to the RNA polymerase beta chain family. As to quaternary structure, the RNAP catalytic core consists of 2 alpha, 1 beta, 1 beta' and 1 omega subunit. When a sigma factor is associated with the core the holoenzyme is formed, which can initiate transcription.

It carries out the reaction RNA(n) + a ribonucleoside 5'-triphosphate = RNA(n+1) + diphosphate. DNA-dependent RNA polymerase catalyzes the transcription of DNA into RNA using the four ribonucleoside triphosphates as substrates. The protein is DNA-directed RNA polymerase subunit beta of Ralstonia nicotianae (strain ATCC BAA-1114 / GMI1000) (Ralstonia solanacearum).